Consider the following 652-residue polypeptide: Zinc finger protein 503 (652 aa).

The segment covering 1–11 (MSTAPSLSALR) has biased composition (polar residues). The tract at residues 1–72 (MSTAPSLSAL…HAVPPSDPLR (72 aa)) is disordered. The span at 16 to 32 (SGGGGGGGGGGGSGGGS) shows a compositional bias: gly residues. Serine 107 carries the post-translational modification Phosphoserine. Disordered regions lie at residues 126–283 (SQIG…GVPA) and 296–338 (INVD…SSVL). A compositionally biased stretch (low complexity) spans 135–144 (PSSKLSSVAS). Composition is skewed to gly residues over residues 145 to 157 (NGGG…NGAG) and 194 to 209 (GGGG…GGGV). Lysine 213 bears the N6-acetyllysine mark. The span at 221 to 230 (ATCQPFTPRT) shows a compositional bias: polar residues. A compositionally biased stretch (low complexity) spans 231–244 (GSPSSSASACSPGG). Serine 235 and serine 241 each carry phosphoserine. Basic and acidic residues predominate over residues 254 to 263 (EGKDDKKDPE). A compositionally biased stretch (gly residues) spans 264–283 (AGGGGSSKGSGGASADGVPA). A compositionally biased stretch (low complexity) spans 314-336 (GSDCGGSSSSSSGSGPSAPTSSS). Residues 520 to 548 (HICNWVSANGPCDKRFATSEELLSHLRTH) form a C2H2-type zinc finger. Arginine 642 is modified (omega-N-methylarginine).

It belongs to the Elbow/Noc family.

It is found in the nucleus. Functionally, may function as a transcriptional repressor. The sequence is that of Zinc finger protein 503 (Znf503) from Mus musculus (Mouse).